The following is a 236-amino-acid chain: MALPQKKYYRQRAHSNPIADHCFDYPSHPDDYDWTPLYPIISEKPNQVEFLDVGCGYGGLLVALSPMFPSNLMLGSEIRVKVSDYVNDRIKALRVQYPDQYQNVAVLRTNAMKYLPNFFHKGQLKKMFFLYPDPHFKKAKHKWRIINKWLLSEYAYVLCEQGIVYTITDVKDLNEWMVAHFEEHPLFESVPEEELKEDPIIEKLYESTEEGQKVTRNNGEKFLAVFRRIADKTKTN.

S-adenosyl-L-methionine is bound by residues Gly-54, 77-78, 110-111, and Leu-130; these read EI and NA. Asp-133 is a catalytic residue. An S-adenosyl-L-methionine-binding site is contributed by 208–210; that stretch reads TEE.

It belongs to the class I-like SAM-binding methyltransferase superfamily. TrmB family.

It is found in the nucleus. The catalysed reaction is guanosine(46) in tRNA + S-adenosyl-L-methionine = N(7)-methylguanosine(46) in tRNA + S-adenosyl-L-homocysteine. It participates in tRNA modification; N(7)-methylguanine-tRNA biosynthesis. Its function is as follows. Catalyzes the formation of N(7)-methylguanine at position 46 (m7G46) in tRNA. This chain is tRNA (guanine-N(7)-)-methyltransferase, found in Bombyx mori (Silk moth).